The following is a 559-amino-acid chain: MAPRRQRSGSGRRVLNEAKKVDNGNKATEDDSPPGKKMRTCQRKGPMAGGKDADRTKDNRDSVKTLLLKGKAPVDPECAAKLGKAHVYCEGDDVYDVMLNQTNLQFNNNKYYLIQLLEDDAQRNFSVWMRWGRVGKTGQHSLVTCSGDLNKAKEIFQKKFLDKTKNNWEDRENFEKVPGKYDMLQMDYAASTQDESKTKEEETLKPESQLDLRVQELLKLICNVQTMEEMMIEMKYDTKRAPLGKLTVAQIKAGYQSLKKIEDCIRAGQHGRALVEACNEFYTRIPHDFGLSIPPVIRTEKELSDKVKLLEALGDIEIALKLVKSERQGLEHPLDQHYRNLHCALRPLDHESNEFKVISQYLQSTHAPTHKDYTMTLLDVFEVEKEGEKEAFREDLPNRMLLWHGSRLSNWVGILSHGLRVAPPEAPITGYMFGKGIYFADMSSKSANYCFASRLKNTGLLLLSEVALGQCNELLEANPKAQGLLRGKHSTKGMGKMAPSPAHFITLNGSTVPLGPASDTGILNPEGYTLNYNEFIVYSPNQVRMRYLLKIQFNFLQLW.

Positions 1–58 (MAPRRQRSGSGRRVLNEAKKVDNGNKATEDDSPPGKKMRTCQRKGPMAGGKDADRTKD) are disordered. The tract at residues 1 to 83 (MAPRRQRSGS…VDPECAAKLG (83 aa)) is N-terminal region (NTR). Basic and acidic residues predominate over residues 14–29 (VLNEAKKVDNGNKATE). 2 consecutive short sequence motifs (nuclear localization signal) follow at residues 19 to 20 (KK) and 33 to 39 (PPGKKMR). An N6-(ADP-ribosyl)lysine; alternate mark is found at Lys36 and Lys37. 2 positions are modified to N6-acetyllysine; alternate: Lys36 and Lys37. Residues 84-181 (KAHVYCEGDD…ENFEKVPGKY (98 aa)) enclose the WGR domain. A PARP alpha-helical domain is found at 207-324 (ESQLDLRVQE…DIEIALKLVK (118 aa)). Position 208 is a phosphoserine (Ser208). Positions 332–559 (HPLDQHYRNL…KIQFNFLQLW (228 aa)) constitute a PARP catalytic domain. NAD(+) contacts are provided by residues 404–406 (HGS), Gly413, Arg420, and Ser446. The For poly [ADP-ribose] polymerase activity role is filled by Glu534.

Belongs to the ARTD/PARP family. As to quaternary structure, component of a base excision repair (BER) complex, containing at least XRCC1, PARP1, POLB and LRIG3. Homo- and heterodimer with PARP1. Interacts (via the PARP catalytic domain) with HPF1. Interacts with core nucleosomes. In terms of processing, auto poly-ADP-ribosylated on serine residues, leading to dissociation of the PARP2-HPF1 complex from chromatin. Poly-ADP-ribosylated by PARP1. Post-translationally, acetylation reduces DNA binding and enzymatic activity. Proteolytically cleaved by caspase-8 (CASP8) in response to apoptosis, leading to its inactivation. Widely expressed; the highest levels were in testis followed by ovary. Expression is correlated with proliferation, with higher levels occurring during early fetal development and organogenesis and in the highly proliferative cell compartments of adult.

It localises to the nucleus. The protein resides in the chromosome. It catalyses the reaction NAD(+) + (ADP-D-ribosyl)n-acceptor = nicotinamide + (ADP-D-ribosyl)n+1-acceptor + H(+).. It carries out the reaction L-seryl-[protein] + NAD(+) = O-(ADP-D-ribosyl)-L-seryl-[protein] + nicotinamide + H(+). The enzyme catalyses L-aspartyl-[protein] + NAD(+) = 4-O-(ADP-D-ribosyl)-L-aspartyl-[protein] + nicotinamide. The catalysed reaction is L-glutamyl-[protein] + NAD(+) = 5-O-(ADP-D-ribosyl)-L-glutamyl-[protein] + nicotinamide. Its activity is regulated as follows. ADP-ribosyltransferase activity is regulated via an allosteric activation mechanism. In absence of activation signal, PARP2 is autoinhibited by the PARP alpha-helical domain (also named HD region), which prevents effective NAD(+)-binding. Activity is highly stimulated by signals, which unfold the PARP alpha-helical domain, relieving autoinhibition. Poly-ADP-ribosyltransferase activity is tightly regulated and PARP2 is removed from damaged chromatin following initial poly-ADP-ribosylation of chromatin to avoid prolonged residence (trapping) that has cytotoxic consequences. CHD1L promotes PARP2 removal from chromatin. In terms of biological role, poly-ADP-ribosyltransferase that mediates poly-ADP-ribosylation of proteins and plays a key role in DNA repair. Mediates glutamate, aspartate or serine ADP-ribosylation of proteins: the ADP-D-ribosyl group of NAD(+) is transferred to the acceptor carboxyl group of target residues and further ADP-ribosyl groups are transferred to the 2'-position of the terminal adenosine moiety, building up a polymer with an average chain length of 20-30 units. Serine ADP-ribosylation of proteins constitutes the primary form of ADP-ribosylation of proteins in response to DNA damage. Mediates glutamate and aspartate ADP-ribosylation of target proteins in absence of HPF1. Following interaction with HPF1, catalyzes serine ADP-ribosylation of target proteins; HPF1 conferring serine specificity by completing the PARP2 active site. PARP2 initiates the repair of double-strand DNA breaks: recognizes and binds DNA breaks within chromatin and recruits HPF1, licensing serine ADP-ribosylation of target proteins, such as histones, thereby promoting decompaction of chromatin and the recruitment of repair factors leading to the reparation of DNA strand breaks. HPF1 initiates serine ADP-ribosylation but restricts the polymerase activity of PARP2 in order to limit the length of poly-ADP-ribose chains. Specifically mediates formation of branched poly-ADP-ribosylation. Branched poly-ADP-ribose chains are specifically recognized by some factors, such as APLF. In addition to proteins, also able to ADP-ribosylate DNA: preferentially acts on 5'-terminal phosphates at DNA strand breaks termini in nicked duplex. The sequence is that of Poly [ADP-ribose] polymerase 2 (Parp2) from Mus musculus (Mouse).